Reading from the N-terminus, the 302-residue chain is 1D-myo-inositol 2-acetamido-2-deoxy-alpha-D-glucopyranoside deacetylase (302 aa).

Positions 12, 15, and 147 each coordinate Zn(2+).

It belongs to the MshB deacetylase family. Requires Zn(2+) as cofactor.

The enzyme catalyses 1D-myo-inositol 2-acetamido-2-deoxy-alpha-D-glucopyranoside + H2O = 1D-myo-inositol 2-amino-2-deoxy-alpha-D-glucopyranoside + acetate. Its function is as follows. Catalyzes the deacetylation of 1D-myo-inositol 2-acetamido-2-deoxy-alpha-D-glucopyranoside (GlcNAc-Ins) in the mycothiol biosynthesis pathway. This chain is 1D-myo-inositol 2-acetamido-2-deoxy-alpha-D-glucopyranoside deacetylase, found in Thermobispora bispora (strain ATCC 19993 / DSM 43833 / CBS 139.67 / JCM 10125 / KCTC 9307 / NBRC 14880 / R51).